Consider the following 308-residue polypeptide: Porphobilinogen deaminase (308 aa).

At cysteine 240 the chain carries S-(dipyrrolylmethanemethyl)cysteine.

This sequence belongs to the HMBS family. As to quaternary structure, monomer. The cofactor is dipyrromethane.

The enzyme catalyses 4 porphobilinogen + H2O = hydroxymethylbilane + 4 NH4(+). Its pathway is porphyrin-containing compound metabolism; protoporphyrin-IX biosynthesis; coproporphyrinogen-III from 5-aminolevulinate: step 2/4. In terms of biological role, tetrapolymerization of the monopyrrole PBG into the hydroxymethylbilane pre-uroporphyrinogen in several discrete steps. This chain is Porphobilinogen deaminase, found in Laribacter hongkongensis (strain HLHK9).